Consider the following 377-residue polypeptide: Peroxisomal membrane protein PEX14 (377 aa).

Positions Met-1–Ser-15 are enriched in low complexity. The segment at Met-1–Pro-24 is disordered. At Ala-2 the chain carries N-acetylalanine. The Peroxisomal matrix portion of the chain corresponds to Ala-2–Asp-108. Lys-34 bears the N6-acetyllysine mark. Residues Tyr-109 to Leu-126 traverse the membrane as a helical segment. Residues Tyr-127–Asp-377 are Cytoplasmic-facing. Residues Pro-230 to Asp-377 are disordered. Ser-232 carries the phosphoserine modification. Composition is skewed to low complexity over residues Pro-244–His-259 and Ser-265–Ser-275. Residues Ser-282 and Ser-335 each carry the phosphoserine modification. Positions Lys-323–Cys-342 are enriched in acidic residues. A compositionally biased stretch (basic and acidic residues) spans Gln-360–Asp-377.

Belongs to the peroxin-14 family. Interacts with PEX13; forming the PEX13-PEX14 docking complex. Interacts with PEX5 (via WxxxF/Y motifs). Interacts with PEX19. Interacts with tubulin.

The protein resides in the peroxisome membrane. Functionally, component of the PEX13-PEX14 docking complex, a translocon channel that specifically mediates the import of peroxisomal cargo proteins bound to PEX5 receptor. The PEX13-PEX14 docking complex forms a large import pore which can be opened to a diameter of about 9 nm. Mechanistically, PEX5 receptor along with cargo proteins associates with the PEX14 subunit of the PEX13-PEX14 docking complex in the cytosol, leading to the insertion of the receptor into the organelle membrane with the concomitant translocation of the cargo into the peroxisome matrix. Plays a key role for peroxisome movement through a direct interaction with tubulin. The protein is Peroxisomal membrane protein PEX14 of Homo sapiens (Human).